Reading from the N-terminus, the 144-residue chain is Major allergen Blo t 12 (144 aa).

An N-terminal signal peptide occupies residues 1–20 (MKSVLIFLVAIALFSANIVS). The interval 24-77 (QTTRGRHTEPDDHHEKPTTQCTHEETTSTQHHHEEVVTTQTPHHEEKTTTEETH) is disordered. Residues 92–144 (HVVCHEEGPIHIQEMCNKYIICSKSGSLWYITVMPCSIGTKFDPISRNCVLDN) form the Chitin-binding type-2 domain. A disulfide bond links C127 and C140.

The protein is Major allergen Blo t 12 of Blomia tropicalis (Mite).